Here is a 155-residue protein sequence, read N- to C-terminus: Short-chain-enoyl-CoA hydratase (155 aa).

This sequence belongs to the enoyl-CoA hydratase/isomerase family.

It carries out the reaction a short-chain (3S)-3-hydroxyacyl-CoA = a short-chain (2E)-enoyl-CoA + H2O. The protein operates within lipid metabolism; butanoate metabolism. This chain is Short-chain-enoyl-CoA hydratase (crt), found in Clostridioides difficile (Peptoclostridium difficile).